The chain runs to 349 residues: [LysW]-L-2-aminoadipate/[LysW]-L-glutamate phosphate reductase (349 aa).

10 to 13 contributes to the NADP(+) binding site; it reads SGYT. The active site involves C150. N316 lines the NADP(+) pocket.

Belongs to the NAGSA dehydrogenase family. Type 1 subfamily. LysY sub-subfamily.

Its subcellular location is the cytoplasm. It carries out the reaction [amino-group carrier protein]-C-terminal-N-(1-carboxy-5-oxopentan-1-yl)-L-glutamine + phosphate + NADP(+) = [amino-group carrier protein]-C-terminal-N-(1-carboxy-5-phosphooxy-5-oxopentan-1-yl)-L-glutamine + NADPH + H(+). The enzyme catalyses [amino-group carrier protein]-C-terminal-gamma-(L-glutamyl-5-semialdehyde)-L-glutamate + phosphate + NADP(+) = [amino-group carrier protein]-C-terminal-gamma-(5-phospho-L-glutamyl)-L-glutamate + NADPH + H(+). The protein operates within amino-acid biosynthesis; L-lysine biosynthesis via AAA pathway; L-lysine from L-alpha-aminoadipate (Thermus route): step 3/5. Its pathway is amino-acid biosynthesis; L-arginine biosynthesis. Involved in both the arginine and lysine biosynthetic pathways. In Sulfurisphaera tokodaii (strain DSM 16993 / JCM 10545 / NBRC 100140 / 7) (Sulfolobus tokodaii), this protein is [LysW]-L-2-aminoadipate/[LysW]-L-glutamate phosphate reductase.